The sequence spans 330 residues: RNA polymerase sigma factor RpoS (330 aa).

Residues 56-89 (DATQLYLGEIGYSPLLTAEEEVYFARRALRGDVA) form a sigma-70 factor domain-1 region. Residues 94–164 (MIESNLRLVV…ERAIMNQTRT (71 aa)) form a sigma-70 factor domain-2 region. The Interaction with polymerase core subunit RpoC motif lies at 118 to 121 (DLIE). Positions 174 to 249 (ELNVYLRTAR…DEKENGPEDT (76 aa)) are sigma-70 factor domain-3. The segment at 262-315 (WLFELNAKQREVLARRFGLLGYEAATLEDVGREIGLTRERVRQIQVEGLRRLRE) is sigma-70 factor domain-4. The segment at residues 288–307 (LEDVGREIGLTRERVRQIQV) is a DNA-binding region (H-T-H motif).

It belongs to the sigma-70 factor family. RpoS subfamily. Interacts with the RNA polymerase core enzyme.

Its subcellular location is the cytoplasm. Functionally, sigma factors are initiation factors that promote the attachment of RNA polymerase to specific initiation sites and are then released. This sigma factor is the master transcriptional regulator of the stationary phase and the general stress response. This chain is RNA polymerase sigma factor RpoS, found in Shigella flexneri.